Consider the following 234-residue polypeptide: Small ribosomal subunit protein uS2 (234 aa).

The protein belongs to the universal ribosomal protein uS2 family.

This is Small ribosomal subunit protein uS2 from Clostridium kluyveri (strain NBRC 12016).